The primary structure comprises 200 residues: MSKWAGIVLAGGMSSRFGEPKALASWQGSTFIEHILKVMTSALQEVVVISHSDIKERVEQFVQVPVIEDIPHYKGDGPLAGIVSGMEYIEADWYAIMPCDAPNVSQEWFTILLEQTSKEYDAVVPIINGRKQPLLAAYHNRVKEKIYALLQEEKRSMGQLLSQCNVKYIAGEDVQANADWFINVNTKEEYVQAQKDLSNE.

GTP-binding positions include 9-11 (LAG), K21, D69, and D100. D100 contributes to the Mg(2+) binding site.

This sequence belongs to the MobA family. Mg(2+) is required as a cofactor.

It is found in the cytoplasm. It carries out the reaction Mo-molybdopterin + GTP + H(+) = Mo-molybdopterin guanine dinucleotide + diphosphate. Its function is as follows. Transfers a GMP moiety from GTP to Mo-molybdopterin (Mo-MPT) cofactor (Moco or molybdenum cofactor) to form Mo-molybdopterin guanine dinucleotide (Mo-MGD) cofactor. This is Probable molybdenum cofactor guanylyltransferase from Bacillus cereus (strain ATCC 10987 / NRS 248).